The chain runs to 622 residues: MVCTRKTKTLVSTCVILSGMTNIICLLYVGWVTNYIASVYVRGQEPVPDKKLEEDKGDTLKIIERLDHLENVIKQHIQEAPAKPEEAEAEPFTDSSLFAHWGQELSPEGRRVALKQFQYYGYNAYLSDRLPLDRPLPDLRPSGCRNLSFPDSLPEVSIVFIFVNEALSVLLRSIHSAMERTPSHLLKEIILVDDNSSNEELKEKLTEYVDKVNGQKPGFIKVVRHSKQEGLIRSRVSGWRAATAPVVALFDAHVEFNVGWAEPVLTRIKENRKRIISPSFDNIKYDNFEIEEYPLAAQGFDWELWCRYLNPPKAWWKLENSTAPIRSPALIGCFIVDRQYFEEIGLLDEGMEVYGGENVELGIRVSEISHTGLSSAPMMVWQCGGSVEVLPCSRIAHIERAHKPYTEDLTAHVRRNALRVAEVWMDEFKSHVYMAWNIPQEDSGIDIGDITARKALRKQLQCKTFRWYLVSVYPEMRMYSDIIAYGVLQNSLKTDLCLDQGPDTENVPIVYICHGMTPQNVYYTSSQQIHVGILSPTVDDDDNRCLVDVNSRPRLIECSYAKAKRMKLHWQFSQGGSIQNRKSKRCLELQENSDMEFGFQLVLQKCSGQHWTITNVLRSLVS.

Over 1–12 (MVCTRKTKTLVS) the chain is Cytoplasmic. A helical; Signal-anchor for type II membrane protein transmembrane segment spans residues 13–35 (TCVILSGMTNIICLLYVGWVTNY). At 36 to 622 (IASVYVRGQE…ITNVLRSLVS (587 aa)) the chain is on the lumenal side. Cystine bridges form between Cys-144–Cys-392, Cys-383–Cys-462, Cys-497–Cys-513, Cys-545–Cys-558, and Cys-586–Cys-606. Asn-146 carries N-linked (GlcNAc...) asparagine glycosylation. The tract at residues 153–267 (LPEVSIVFIF…VGWAEPVLTR (115 aa)) is catalytic subdomain A. Asp-194 contacts substrate. N-linked (GlcNAc...) asparagine glycosylation occurs at Asn-195. Mn(2+)-binding residues include Asp-251 and His-253. The N-linked (GlcNAc...) asparagine glycan is linked to Asn-320. The interval 324-400 (PIRSPALIGC…PCSRIAHIER (77 aa)) is catalytic subdomain B. His-397 is a binding site for Mn(2+). Positions 400 and 405 each coordinate substrate. In terms of domain architecture, Ricin B-type lectin spans 484–614 (AYGVLQNSLK…KCSGQHWTIT (131 aa)).

Belongs to the glycosyltransferase 2 family. GalNAc-T subfamily. The cofactor is Mn(2+).

Its subcellular location is the golgi apparatus membrane. The enzyme catalyses L-seryl-[protein] + UDP-N-acetyl-alpha-D-galactosamine = a 3-O-[N-acetyl-alpha-D-galactosaminyl]-L-seryl-[protein] + UDP + H(+). It carries out the reaction L-threonyl-[protein] + UDP-N-acetyl-alpha-D-galactosamine = a 3-O-[N-acetyl-alpha-D-galactosaminyl]-L-threonyl-[protein] + UDP + H(+). Its pathway is protein modification; protein glycosylation. In terms of biological role, catalyzes the initial reaction in O-linked oligosaccharide biosynthesis, the transfer of an N-acetyl-D-galactosamine (GalNAc) residue from UDP-GalNAc to a serine or threonine residue on the protein receptor. In Mus musculus (Mouse), this protein is Polypeptide N-acetylgalactosaminyltransferase 18 (Galnt18).